Here is a 614-residue protein sequence, read N- to C-terminus: V-type proton ATPase catalytic subunit A isoform 1 (614 aa).

247–254 contributes to the ATP binding site; that stretch reads GAFGCGKT.

Belongs to the ATPase alpha/beta chains family. V-ATPase is a heteromultimeric enzyme made up of two complexes: the ATP-hydrolytic V1 complex and the proton translocation V0 complex. The V1 complex consists of three catalytic AB heterodimers that form a heterohexamer, three peripheral stalks each consisting of EG heterodimers, one central rotor including subunits D and F, and the regulatory subunits C and H. The proton translocation complex V0 consists of the proton transport subunit a, a ring of proteolipid subunits c9c'', rotary subunit d, subunits e and f, and the accessory subunits VhaAC45 and ATP6AP2.

It catalyses the reaction ATP + H2O + 4 H(+)(in) = ADP + phosphate + 5 H(+)(out). ATP hydrolysis occurs at the interface between the nucleotide-binding domains of subunits A and B. ATP hydrolysis triggers a conformational change in the subunits D and F, which induces a shift of subunit d. The c-ring is subsequently rotated and results in a continuous proton translocation across the membrane. Functionally, catalytic subunit of the V1 complex of vacuolar(H+)-ATPase (V-ATPase), a multisubunit enzyme composed of a peripheral complex (V1) that hydrolyzes ATP and a membrane integral complex (V0) that translocates protons. V-ATPase is responsible for acidifying and maintaining the pH of intracellular compartments and in some cell types, is targeted to the plasma membrane, where it is responsible for acidifying the extracellular environment. The chain is V-type proton ATPase catalytic subunit A isoform 1 (Vha68-1) from Drosophila melanogaster (Fruit fly).